The primary structure comprises 420 residues: Putative zinc metalloprotease Lmo1318 (420 aa).

Histidine 18 contributes to the Zn(2+) binding site. Glutamate 19 is a catalytic residue. Histidine 22 lines the Zn(2+) pocket. Transmembrane regions (helical) follow at residues 172-194 (TIFAGPLFNFILAILIFTALAFV), 304-326 (NWIVQIFTILGNMFTGGFSLDML), 347-369 (VLNWTAVLSINLGIVNLLPLPAL), and 393-412 (GIIHFAGFALLMVLMILVTW). Residues 176–267 (GPLFNFILAI…DGKTQDIDVK (92 aa)) form the PDZ domain.

This sequence belongs to the peptidase M50B family. Zn(2+) is required as a cofactor.

It is found in the cell membrane. The protein is Putative zinc metalloprotease Lmo1318 of Listeria monocytogenes serovar 1/2a (strain ATCC BAA-679 / EGD-e).